The chain runs to 314 residues: Lipoyl synthase (314 aa).

Positions 61, 66, 72, 87, 91, 94, and 301 each coordinate [4Fe-4S] cluster. The region spanning 73-290 is the Radical SAM core domain; it reads FGRGTATFMI…EEEAKKMGFS (218 aa).

The protein belongs to the radical SAM superfamily. Lipoyl synthase family. Requires [4Fe-4S] cluster as cofactor.

The protein resides in the cytoplasm. The enzyme catalyses [[Fe-S] cluster scaffold protein carrying a second [4Fe-4S](2+) cluster] + N(6)-octanoyl-L-lysyl-[protein] + 2 oxidized [2Fe-2S]-[ferredoxin] + 2 S-adenosyl-L-methionine + 4 H(+) = [[Fe-S] cluster scaffold protein] + N(6)-[(R)-dihydrolipoyl]-L-lysyl-[protein] + 4 Fe(3+) + 2 hydrogen sulfide + 2 5'-deoxyadenosine + 2 L-methionine + 2 reduced [2Fe-2S]-[ferredoxin]. The protein operates within protein modification; protein lipoylation via endogenous pathway; protein N(6)-(lipoyl)lysine from octanoyl-[acyl-carrier-protein]: step 2/2. Catalyzes the radical-mediated insertion of two sulfur atoms into the C-6 and C-8 positions of the octanoyl moiety bound to the lipoyl domains of lipoate-dependent enzymes, thereby converting the octanoylated domains into lipoylated derivatives. This chain is Lipoyl synthase, found in Dechloromonas aromatica (strain RCB).